Consider the following 1898-residue polypeptide: Receptor-type tyrosine-protein phosphatase F (1898 aa).

A signal peptide spans 1–29 (MAPEPAPGRRMVPLVPALVMLGLMAGAHG). Residues 30–1254 (DSKPVFVKVP…QQQEEPEMLW (1225 aa)) lie on the Extracellular side of the membrane. Ig-like C2-type domains lie at 33–123 (PVFV…AKLS), 135–224 (PTID…ANLY), and 232–314 (PRFS…AQVT). A disulfide bond links cysteine 54 and cysteine 107. 68 to 77 (KKGKKVSSQR) contacts heparin. Residue asparagine 117 is glycosylated (N-linked (GlcNAc...) asparagine). Cysteine 156 and cysteine 207 are disulfide-bonded. N-linked (GlcNAc...) asparagine glycosylation is found at asparagine 250 and asparagine 295. A disulfide bridge connects residues cysteine 253 and cysteine 298. 8 consecutive Fibronectin type-III domains span residues 321–411 (PPID…TGEQ), 416–510 (PPRR…TQQG), 514–604 (QPAD…TAQS), 609–706 (PPQK…TDED), 711–810 (PPRK…TTGA), 811–905 (VPGR…PEDA), 909–1001 (FPQN…TMPM), and 1005–1089 (FAKN…TAPD). The disordered stretch occupies residues 693 to 713 (GPESSPVLVRTDEDVPSGPPR). N-linked (GlcNAc...) asparagine glycosylation is present at asparagine 721. Asparagine 941 and asparagine 957 each carry an N-linked (GlcNAc...) asparagine glycan. A helical transmembrane segment spans residues 1255 to 1275 (VTGPVLAVILIILIVIAILLF). The Cytoplasmic segment spans residues 1276–1898 (KRKRTHSPSS…YLGSFDHYAT (623 aa)). Position 1296 is a phosphoserine (serine 1296). 2 consecutive Tyrosine-protein phosphatase domains span residues 1343–1598 (FSQE…LLEA) and 1630–1889 (MELE…ALEY). Substrate contacts are provided by residues aspartate 1507, 1539–1545 (CSAGVGR), and glutamine 1583. The Phosphocysteine intermediate role is filled by cysteine 1539. The Phosphocysteine intermediate role is filled by cysteine 1830.

The protein belongs to the protein-tyrosine phosphatase family. Receptor class 2A subfamily. In terms of assembly, interacts with GRIP1. Interacts with PPFIA1, PPFIA2 and PPFIA3. Interacts with PTPRF.

The protein resides in the membrane. It catalyses the reaction O-phospho-L-tyrosyl-[protein] + H2O = L-tyrosyl-[protein] + phosphate. Its function is as follows. Possible cell adhesion receptor. It possesses an intrinsic protein tyrosine phosphatase activity (PTPase) and dephosphorylates EPHA2 regulating its activity. The first PTPase domain has enzymatic activity, while the second one seems to affect the substrate specificity of the first one. The protein is Receptor-type tyrosine-protein phosphatase F (Ptprf) of Rattus norvegicus (Rat).